We begin with the raw amino-acid sequence, 258 residues long: Acidic leucine-rich nuclear phosphoprotein 32 family member E (258 aa).

M1 carries the post-translational modification N-acetylmethionine. LRR repeat units lie at residues 18–38, 43–64, 65–87, and 89–110; these read EVTELVLDNCLCVNGEIEGLN, ELEFLSMANVELSSLARLPSLN, KLRKLELSDNIISGGLEVLAEKC, and NLTYLNLSGNKIKDLSTVEALQ. K68 is covalently cross-linked (Glycyl lysine isopeptide (Lys-Gly) (interchain with G-Cter in SUMO2)). In terms of domain architecture, LRRCT spans 123-161; sequence CEITNLEDYRESIFELLQQITYLDGFDQEDNEAPDSEEE. Acidic residues-rich tracts occupy residues 149-206 and 216-238; these read DQED…EEEV and IQDEEDDDDYVDEGEEEEEEEEE. Positions 149–258 are disordered; the sequence is DQEDNEAPDS…AEDDGEEDDD (110 aa). Residues 205–258 are ZID domain; that stretch reads EVGLSYLMKEEIQDEEDDDDYVDEGEEEEEEEEEGPRGEKRKRDAEDDGEEDDD. Residues 239–249 are compositionally biased toward basic and acidic residues; the sequence is GPRGEKRKRDA.

The protein belongs to the ANP32 family. As to quaternary structure, component of a SWR1-like complex, composed of EP400, KAT5/TIP60, TRRAP, BRD8, RUVBL1, RUVBL2, ING3 and ANP32E; the complex does not contain SRCAP. Interacts with H2A.Z/H2AZ1. Interacts with the importin alpha KPNA1 and KPNA2. Phosphorylated. The phosphorylation is nuclear localization signal (NLS)-dependent.

It is found in the cytoplasm. The protein resides in the nucleus. Its function is as follows. Histone chaperone that specifically mediates the genome-wide removal of histone H2A.Z/H2AZ1 from the nucleosome: removes H2A.Z/H2AZ1 from its normal sites of deposition, especially from enhancer and insulator regions. Not involved in deposition of H2A.Z/H2AZ1 in the nucleosome. May stabilize the evicted H2A.Z/H2AZ1-H2B dimer, thus shifting the equilibrium towards dissociation and the off-chromatin state. Inhibits activity of protein phosphatase 2A (PP2A). Does not inhibit protein phosphatase 1. May play a role in cerebellar development and synaptogenesis. This is Acidic leucine-rich nuclear phosphoprotein 32 family member E (Anp32e) from Rattus norvegicus (Rat).